A 1140-amino-acid chain; its full sequence is Receptor-type guanylate cyclase gcy-3 (1140 aa).

An N-terminal signal peptide occupies residues 1-21; sequence MKNVFQLLIPLFFHLFSLVSL. Residues 22 to 495 lie on the Extracellular side of the membrane; sequence QNIPVSTGTT…CPLPFWEQYG (474 aa). 7 N-linked (GlcNAc...) asparagine glycosylation sites follow: Asn-220, Asn-301, Asn-349, Asn-385, Asn-418, Asn-441, and Asn-459. A helical transmembrane segment spans residues 496-516; that stretch reads ILIFVGAGVFLIMITTNLICF. Over 517 to 1140 the chain is Cytoplasmic; the sequence is LFMIKNRREE…RQYKMDTLKI (624 aa). Residues 538-826 enclose the Protein kinase domain; the sequence is FVKLRELERK…NICEQLRDLM (289 aa). ATP is bound by residues 544 to 552 and Lys-582; that span reads LERKSKGTS. The Guanylate cyclase domain occupies 897 to 1027; the sequence is TVFFSDVVKF…DTVNTASRME (131 aa). The disordered stretch occupies residues 1083–1140; that stretch reads PSISNRSTPPVTQERFTVRAPDTPEARSVSSHGSRPSSNHNNNNDPLYRQYKMDTLKI. Over residues 1084 to 1097 the composition is skewed to polar residues; the sequence is SISNRSTPPVTQER. Over residues 1109–1126 the composition is skewed to low complexity; the sequence is RSVSSHGSRPSSNHNNNN.

It belongs to the adenylyl cyclase class-4/guanylyl cyclase family. As to expression, expressed asymmetrically in ASE right (ASER) sensory neuron and bilaterally in ASI sensory neurons. Expressed in PVT interneuron.

It localises to the cell membrane. The enzyme catalyses GTP = 3',5'-cyclic GMP + diphosphate. In terms of biological role, guanylate cyclase involved in the production of the second messenger cGMP. The protein is Receptor-type guanylate cyclase gcy-3 of Caenorhabditis elegans.